The primary structure comprises 149 residues: MVELHDLQPHWGATKEKKRVGRGIGSGHGKTAGRGHKGQKSRSGDRKMPPYFEGGQTPLYMRIPKRGFKNPTRKEYTPVNVGVIDKLFEDGMEITPEVLASKGLCDEKDRVKILGDGELTKKFVIKAHAFSKSAKEKIEKAGGKWEIIS.

The tract at residues 1-64 (MVELHDLQPH…GQTPLYMRIP (64 aa)) is disordered. Positions 31 to 40 (TAGRGHKGQK) are enriched in basic residues.

This sequence belongs to the universal ribosomal protein uL15 family. As to quaternary structure, part of the 50S ribosomal subunit.

Functionally, binds to the 23S rRNA. This Aquifex aeolicus (strain VF5) protein is Large ribosomal subunit protein uL15.